Consider the following 201-residue polypeptide: Proteasome subunit beta type-2 (201 aa).

Methionine 1 is subject to N-acetylmethionine.

This sequence belongs to the peptidase T1B family. The 26S proteasome consists of a 20S proteasome core and two 19S regulatory subunits. The 20S proteasome core is a barrel-shaped complex made of 28 subunits that are arranged in four stacked rings. The two outer rings are each formed by seven alpha subunits, and the two inner rings are formed by seven beta subunits. The proteolytic activity is exerted by three beta-subunits PSMB5, PSMB6 and PSMB7. Detected in liver (at protein level).

Its subcellular location is the cytoplasm. The protein localises to the nucleus. Functionally, non-catalytic component of the 20S core proteasome complex involved in the proteolytic degradation of most intracellular proteins. This complex plays numerous essential roles within the cell by associating with different regulatory particles. Associated with two 19S regulatory particles, forms the 26S proteasome and thus participates in the ATP-dependent degradation of ubiquitinated proteins. The 26S proteasome plays a key role in the maintenance of protein homeostasis by removing misfolded or damaged proteins that could impair cellular functions, and by removing proteins whose functions are no longer required. Associated with the PA200 or PA28, the 20S proteasome mediates ubiquitin-independent protein degradation. This type of proteolysis is required in several pathways including spermatogenesis (20S-PA200 complex) or generation of a subset of MHC class I-presented antigenic peptides (20S-PA28 complex). In Mus musculus (Mouse), this protein is Proteasome subunit beta type-2 (Psmb2).